The chain runs to 764 residues: Thyrotropin receptor (764 aa).

An N-terminal signal peptide occupies residues 1–21 (MRPGSLLLLVLLLALSRSLRG). The Extracellular portion of the chain corresponds to 22-413 (KECASPPCEC…EFNPCEDIMG (392 aa)). Cysteine 31 and cysteine 41 are disulfide-bonded. N-linked (GlcNAc...) asparagine glycosylation is found at asparagine 77 and asparagine 99. LRR repeat units follow at residues 100–124 (LSKM…ALTE), 125–150 (LPLL…IYST), 151–174 (DIFF…AFQG), 176–199 (CNET…AFNG), 200–223 (TKLD…AFGG), 225–248 (YSGP…GLEH), and 264–288 (PLSL…AFKN). Asparagine 177 and asparagine 198 each carry an N-linked (GlcNAc...) asparagine glycan. Asparagine 302 carries an N-linked (GlcNAc...) asparagine glycan. At tyrosine 385 the chain carries Sulfotyrosine. The helical transmembrane segment at 414–441 (YRFLRIVVWFVSLLALLGNIFVLLILLT) threads the bilayer. Topologically, residues 442-450 (SHYKLTVPR) are cytoplasmic. The chain crosses the membrane as a helical span at residues 451 to 473 (FLMCNLAFADFCMGVYLLLIASV). Residues 474-494 (DLYTHSEYYNHAIDWQTGPGC) lie on the Extracellular side of the membrane. Cysteines 494 and 569 form a disulfide. The chain crosses the membrane as a helical span at residues 495-517 (NTAGFFTVFASELSVYTLTVITL). The Cytoplasmic segment spans residues 518–537 (ERWYAITFAMRLDRKIRLRH). Residues 538–560 (AYTIMAGGWVSCFLLALLPMVGI) traverse the membrane as a helical segment. Residues 561–580 (SSYAKVSICLPMDTDTPLAL) lie on the Extracellular side of the membrane. The chain crosses the membrane as a helical span at residues 581 to 602 (AYIVLVLLLNVVAFVVVCSCYV). At 603 to 625 (KIYITVRNPQYNPRDKDTKIAKR) the chain is on the cytoplasmic side. The chain crosses the membrane as a helical span at residues 626–649 (MAVLIFTDFMCMAPISFYALSALM). The Extracellular portion of the chain corresponds to 650–660 (NKPLITVTNSK). A helical transmembrane segment spans residues 661–682 (ILLVLFYPLNSCANPFLYAIFT). Over 683-764 (KAFQRDVFIL…ISEEYKQTAL (82 aa)) the chain is Cytoplasmic. Residues 762 to 764 (TAL) carry the PDZ-binding motif.

The protein belongs to the G-protein coupled receptor 1 family. FSH/LSH/TSH subfamily. In terms of assembly, interacts with heterodimer GPHA2:GPHB5; this interaction stimulates cAMP production. Interacts (via the PDZ-binding motif) with SCRIB; regulates TSHR trafficking and function. In terms of processing, glycosylated. Post-translationally, sulfated. Sulfation on Tyr-385 plays a role in thyrotropin receptor binding and activation.

It is found in the cell membrane. It localises to the basolateral cell membrane. In terms of biological role, receptor for the thyroid-stimulating hormone (TSH) or thyrotropin. Also acts as a receptor for the heterodimeric glycoprotein hormone (GPHA2:GPHB5) or thyrostimulin. The activity of this receptor is mediated by G proteins which activate adenylate cyclase. Plays a central role in controlling thyroid cell metabolism. The chain is Thyrotropin receptor (Tshr) from Mus musculus (Mouse).